The primary structure comprises 574 residues: Adenine deaminase (574 aa).

The protein belongs to the metallo-dependent hydrolases superfamily. Adenine deaminase family. It depends on Mn(2+) as a cofactor.

It carries out the reaction adenine + H2O + H(+) = hypoxanthine + NH4(+). The chain is Adenine deaminase from Thermosipho melanesiensis (strain DSM 12029 / CIP 104789 / BI429).